A 478-amino-acid chain; its full sequence is Zinc metalloproteinase/disintegrin (478 aa).

Positions 1–20 (MIEVLLVTICLAAFPYQGSS) are cleaved as a signal peptide. Positions 21–187 (IILESGNVND…PIKKASQSNL (167 aa)) are excised as a propeptide. 3 disulfide bridges follow: Cys304/Cys384, Cys344/Cys368, and Cys346/Cys351. Position 329 (His329) interacts with Zn(2+). Glu330 is an active-site residue. Zn(2+) is bound by residues His333 and His339. The propeptide occupies 390 to 405 (LRTDTVSTPVSGNELL). A Disintegrin domain is found at 397 to 478 (TPVSGNELLE…AGCPRNPFHA (82 aa)). 6 disulfides stabilise this stretch: Cys411/Cys426, Cys413/Cys421, Cys420/Cys443, Cys434/Cys440, Cys439/Cys464, and Cys452/Cys471. Positions 456–458 (RGD) match the Cell attachment site motif.

The protein belongs to the venom metalloproteinase (M12B) family. P-II subfamily. P-IIa sub-subfamily. In terms of assembly, monomer. Expressed by the venom gland.

Its subcellular location is the secreted. Its function is as follows. Binds alpha-5/beta-1 (ITGAV/ITGB1), alpha-V/beta-3 (ITGAV/ITGB3) and alpha-M/beta-2 (ITGAM/ITGB2) integrins. Is a potent inhibitor of platelet aggregation induced by ADP, collagen, and thrombin. Induces neutrophil chemotaxis and inhibits the chemotaxis of human neutrophils toward fMLP, IL-8, and jarastatin itself. Directly activates an integrin-coupled signaling and modulate the MAPK pathway in different ways, leading the neutrophils to express different functional response. Induces Erk-2 translocation to nucleus and a delay of the spontaneous apoptosis of neutrophils. Increases the IL-8 mRNA levels in neutrophils. When injected simultaneously with melanoma cells in mice, jarastatin, flavoridin (FL) and kistrin (KR) significantly reduce tumor lung colonization. Inhibits mouse melanoma B16F10 cell growth in vitro. When it interacts with melanoma cells, it induces actin cytoskeleton rearrangement, increasing actin polymerization and PTK2/FAK1 phosphorylation. Interferes with NF-kappaB translocation in melanoma cells. This Bothrops jararaca (Jararaca) protein is Zinc metalloproteinase/disintegrin.